The sequence spans 113 residues: 2Fe-2S ferredoxin (113 aa).

Residues 2 to 104 form the 2Fe-2S ferredoxin-type domain; it reads PKVIFLPNED…DLVVEIPKYN (103 aa). The [2Fe-2S] cluster site is built by C42, C48, C51, and C87.

This sequence belongs to the adrenodoxin/putidaredoxin family. Requires [2Fe-2S] cluster as cofactor.

Its function is as follows. Ferredoxin are iron-sulfur proteins that transfer electrons in a wide variety of metabolic reactions. The chain is 2Fe-2S ferredoxin (fdx) from Haemophilus influenzae (strain ATCC 51907 / DSM 11121 / KW20 / Rd).